The sequence spans 568 residues: Urease subunit alpha (568 aa).

The region spanning 130–568 is the Urease domain; it reads GGIDTHIHFI…LPMAQRYFLF (439 aa). The Ni(2+) site is built by His135, His137, and Lys218. At Lys218 the chain carries N6-carboxylysine. Residue His220 participates in substrate binding. The Ni(2+) site is built by His247 and His273. The active-site Proton donor is the His321. Asp361 is a binding site for Ni(2+).

The protein belongs to the metallo-dependent hydrolases superfamily. Urease alpha subunit family. As to quaternary structure, heterotrimer of UreA (gamma), UreB (beta) and UreC (alpha) subunits. Three heterotrimers associate to form the active enzyme. Ni cation is required as a cofactor. Post-translationally, carboxylation allows a single lysine to coordinate two nickel ions.

It is found in the cytoplasm. The catalysed reaction is urea + 2 H2O + H(+) = hydrogencarbonate + 2 NH4(+). The protein operates within nitrogen metabolism; urea degradation; CO(2) and NH(3) from urea (urease route): step 1/1. This is Urease subunit alpha from Burkholderia pseudomallei (strain 668).